The sequence spans 204 residues: Shikimate kinase (204 aa).

35–40 (ASGKST) contacts ATP. Residue Ser39 coordinates Mg(2+). 3 residues coordinate substrate: Asp57, Arg81, and Gly103. Arg142 is a binding site for ATP. Residue Arg169 coordinates substrate.

The protein belongs to the shikimate kinase family. In terms of assembly, monomer. It depends on Mg(2+) as a cofactor.

Its subcellular location is the cytoplasm. The enzyme catalyses shikimate + ATP = 3-phosphoshikimate + ADP + H(+). It functions in the pathway metabolic intermediate biosynthesis; chorismate biosynthesis; chorismate from D-erythrose 4-phosphate and phosphoenolpyruvate: step 5/7. Catalyzes the specific phosphorylation of the 3-hydroxyl group of shikimic acid using ATP as a cosubstrate. The polypeptide is Shikimate kinase (Salinibacter ruber (strain DSM 13855 / M31)).